The chain runs to 61 residues: Cytochrome c oxidase subunit 9, mitochondrial (61 aa).

The Mitochondrial matrix segment spans residues 1 to 13 (MAIAPITGTLKRK). Residues 14–36 (IITDISIGFACGFALATGYWYIE) form a helical membrane-spanning segment. Over 37 to 56 (HKPLIVKREAYYAKLKAQQE) the chain is Mitochondrial intermembrane. Residues 57–61 (AEDSA) constitute a propeptide, removed in mature form.

This sequence belongs to the fungal cytochrome c oxidase subunit 7a family. Component of the cytochrome c oxidase (complex IV, CIV), a multisubunit enzyme composed of a catalytic core of 3 subunits and several supernumerary subunits. The complex exists as a monomer or a dimer and forms supercomplexes (SCs) in the inner mitochondrial membrane with ubiquinol-cytochrome c oxidoreductase (cytochrome b-c1 complex, complex III, CIII).

It is found in the mitochondrion inner membrane. Its pathway is energy metabolism; oxidative phosphorylation. Functionally, component of the cytochrome c oxidase, the last enzyme in the mitochondrial electron transport chain which drives oxidative phosphorylation. The respiratory chain contains 3 multisubunit complexes succinate dehydrogenase (complex II, CII), ubiquinol-cytochrome c oxidoreductase (cytochrome b-c1 complex, complex III, CIII) and cytochrome c oxidase (complex IV, CIV), that cooperate to transfer electrons derived from NADH and succinate to molecular oxygen, creating an electrochemical gradient over the inner membrane that drives transmembrane transport and the ATP synthase. Cytochrome c oxidase is the component of the respiratory chain that catalyzes the reduction of oxygen to water. Electrons originating from reduced cytochrome c in the intermembrane space (IMS) are transferred via the dinuclear copper A center (CU(A)) of subunit 2 and heme A of subunit 1 to the active site in subunit 1, a binuclear center (BNC) formed by heme A3 and copper B (CU(B)). The BNC reduces molecular oxygen to 2 water molecules using 4 electrons from cytochrome c in the IMS and 4 protons from the mitochondrial matrix. The polypeptide is Cytochrome c oxidase subunit 9, mitochondrial (COX9) (Debaryomyces hansenii (strain ATCC 36239 / CBS 767 / BCRC 21394 / JCM 1990 / NBRC 0083 / IGC 2968) (Yeast)).